The chain runs to 236 residues: Auxin-responsive protein IAA16 (236 aa).

An EAR-like (transcriptional repression) motif is present at residues 9-13 (LRLGL). The tract at residues 82-110 (KNVMSGQKPTTGDATEGNDKTSGSSGATS) is disordered. The segment covering 85-94 (MSGQKPTTGD) has biased composition (polar residues). The region spanning 118 to 218 (VAYVKVSMDG…SCKRIRIMKG (101 aa)) is the PB1 domain.

Belongs to the Aux/IAA family. Homodimers and heterodimers.

The protein resides in the nucleus. Aux/IAA proteins are short-lived transcriptional factors that function as repressors of early auxin response genes at low auxin concentrations. Repression is thought to result from the interaction with auxin response factors (ARFs), proteins that bind to the auxin-responsive promoter element (AuxRE). Formation of heterodimers with ARF proteins may alter their ability to modulate early auxin response genes expression. In Arabidopsis thaliana (Mouse-ear cress), this protein is Auxin-responsive protein IAA16 (IAA16).